A 457-amino-acid chain; its full sequence is Secreted effector kinase SteC (457 aa).

Lys-256 serves as a coordination point for ATP.

It belongs to the protein kinase superfamily. Post-translationally, autophosphorylated.

Its subcellular location is the secreted. The protein resides in the host cytoplasm. Functionally, effector proteins function to alter host cell physiology and promote bacterial survival in host tissues. This protein is a kinase, which is required for SPI-2 T3SS-dependent F-actin meshwork formation in infected host cells. The chain is Secreted effector kinase SteC (steC) from Salmonella typhimurium (strain LT2 / SGSC1412 / ATCC 700720).